The following is a 448-amino-acid chain: Potassium/proton antiporter CemA (448 aa).

The next 4 helical transmembrane spans lie at 47–67 (IVFY…LSLL), 213–233 (LSSL…STLF), 314–334 (IISH…LFVA), and 395–415 (IISC…KYLI).

Belongs to the CemA family.

The protein localises to the plastid membrane. The catalysed reaction is K(+)(in) + H(+)(out) = K(+)(out) + H(+)(in). Its function is as follows. May be involved in proton extrusion. In Aneura mirabilis (Parasitic liverwort), this protein is Potassium/proton antiporter CemA.